We begin with the raw amino-acid sequence, 256 residues long: Pimeloyl-[acyl-carrier protein] methyl ester esterase (256 aa).

Positions 16–240 constitute an AB hydrolase-1 domain; it reads LVILHGWGVN…PKASHAPFLS (225 aa). Substrate-binding positions include W22, 80-81, and 143-147; these read SL and FLAIQ. Catalysis depends on S80, which acts as the Nucleophile. Active-site residues include D207 and H235. A substrate-binding site is contributed by H235.

This sequence belongs to the AB hydrolase superfamily. Carboxylesterase BioH family. As to quaternary structure, monomer.

It is found in the cytoplasm. The enzyme catalyses 6-carboxyhexanoyl-[ACP] methyl ester + H2O = 6-carboxyhexanoyl-[ACP] + methanol + H(+). It functions in the pathway cofactor biosynthesis; biotin biosynthesis. Functionally, the physiological role of BioH is to remove the methyl group introduced by BioC when the pimeloyl moiety is complete. It allows to synthesize pimeloyl-ACP via the fatty acid synthetic pathway through the hydrolysis of the ester bonds of pimeloyl-ACP esters. This Shewanella woodyi (strain ATCC 51908 / MS32) protein is Pimeloyl-[acyl-carrier protein] methyl ester esterase.